Reading from the N-terminus, the 63-residue chain is Beta-defensin 3 (63 aa).

The N-terminal stretch at Met1–Ala20 is a signal peptide. Residues Phe21–Ser22 constitute a propeptide that is removed on maturation. 3 cysteine pairs are disulfide-bonded: Cys31/Cys59, Cys38/Cys52, and Cys42/Cys60.

The protein belongs to the beta-defensin family. LAP/TAP subfamily. In terms of tissue distribution, highest expression in salivary glands, epididymis, ovary and pancreas and to a lesser extent in lung, liver and brain. Low or no expression in skeletal muscle and tongue.

Its subcellular location is the secreted. Antimicrobial activity against Gram-negative bacteria E.coli and P.aeruginosa. This is Beta-defensin 3 (Defb3) from Mus musculus (Mouse).